We begin with the raw amino-acid sequence, 289 residues long: Nucleotide-binding protein CHY_0272 (289 aa).

Residue 8 to 15 participates in ATP binding; sequence GLSGAGKT. 59 to 62 contributes to the GTP binding site; that stretch reads DVRG.

This sequence belongs to the RapZ-like family.

In terms of biological role, displays ATPase and GTPase activities. In Carboxydothermus hydrogenoformans (strain ATCC BAA-161 / DSM 6008 / Z-2901), this protein is Nucleotide-binding protein CHY_0272.